The chain runs to 1254 residues: Receptor tyrosine-protein kinase erbB-2 (1254 aa).

The first 22 residues, 1 to 22, serve as a signal peptide directing secretion; the sequence is MELAAWCGWGLLLALLSPGASG. The Extracellular portion of the chain corresponds to 23–652; it reads TQVCTGTDMK…PAEQRASPAT (630 aa). Cys26 and Cys53 are disulfide-bonded. Asn68, Asn125, and Asn187 each carry an N-linked (GlcNAc...) asparagine glycan. Intrachain disulfides connect Cys162/Cys192, Cys195/Cys204, Cys199/Cys212, Cys236/Cys244, Cys240/Cys252, Cys255/Cys264, Cys268/Cys295, Cys299/Cys311, Cys315/Cys331, Cys334/Cys338, Cys342/Cys367, Cys475/Cys504, Cys511/Cys520, and Cys515/Cys528. An N-linked (GlcNAc...) asparagine glycan is attached at Asn259. Asn530 carries N-linked (GlcNAc...) asparagine glycosylation. Intrachain disulfides connect Cys531–Cys540, Cys544–Cys560, Cys563–Cys576, Cys567–Cys584, Cys587–Cys596, Cys600–Cys623, Cys626–Cys634, and Cys630–Cys642. Residue Asn571 is glycosylated (N-linked (GlcNAc...) asparagine). Asn629 carries N-linked (GlcNAc...) asparagine glycosylation. A helical transmembrane segment spans residues 653-675; sequence SIIATVVGILLFLVIGVVVGILI. The segment at 676 to 689 is required for interaction with KPNB1 and EEA1; that stretch reads KRRRQKIRKYTMRR. The short motif at 676 to 689 is the Nuclear localization signal element; sequence KRRRQKIRKYTMRR. The Cytoplasmic segment spans residues 676-1254; that stretch reads KRRRQKIRKY…PEYLGLDVPV (579 aa). In terms of domain architecture, Protein kinase spans 720–987; that stretch reads LRKVKVLGSG…RMARDPQRFV (268 aa). Residues 726–734 and Lys753 each bind ATP; that span reads LGSGAFGTV. Asp845 acts as the Proton acceptor in catalysis. Tyr877 is modified (phosphotyrosine). Disordered stretches follow at residues 1029 to 1116 and 1133 to 1179; these read GFFF…SEDP and CSPQ…GKNG. 4 positions are modified to phosphoserine: Ser1054, Ser1078, Ser1083, and Ser1107. Tyr1112 is modified (phosphotyrosine). Phosphotyrosine; by autocatalysis is present on Tyr1139. Positions 1146–1161 are enriched in pro residues; that stretch reads RPQPPLTPEGPLPPVR. Thr1166 carries the post-translational modification Phosphothreonine. The interval 1195 to 1197 is interaction with PIK3C2B; sequence EYL. Tyr1196 carries the post-translational modification Phosphotyrosine. A disordered region spans residues 1223–1254; sequence DQDPSERGSPPNTFEGTPTAENPEYLGLDVPV. The span at 1232–1242 shows a compositional bias: polar residues; it reads PPNTFEGTPTA. Tyr1247 carries the phosphotyrosine; by autocatalysis modification.

The protein belongs to the protein kinase superfamily. Tyr protein kinase family. EGF receptor subfamily. Homodimer. Heterodimer with EGFR, ERBB3 and ERBB4. Part of a complex with EGFR and either PIK3C2A or PIK3C2B. May interact with PIK3C2B when phosphorylated on Tyr-1196. Interacts with PRKCABP and PLXNB1. Interacts (when phosphorylated on Tyr-1247) with MEMO. Interacts with MUC1. Interacts (when phosphorylated on Tyr-1139) with GRB7 (via SH2 domain). Interacts (when phosphorylated on Tyr-1247) with ERBIN. Interacts with SRC, KPNB1, RANBP2, EEA1, CRM1, CLTC, PTK6, RPA194, MYOC and ACTB. Interacts (preferentially with the tyrosine phosphorylated form) with CPNE3; this interaction occurs at the cell membrane and is increased in a growth factor heregulin-dependent manner. Interacts with HSP90AA1 and HSP90AB1 in an ATP-dependent manner; the interaction suppresses ERBB2 kinase activity. Interacts with SORL1; this interaction regulates ERBB2 subcellular distribution by promoting its recycling after internalization from endosomes back to the plasma membrane, hence stimulates ERBB2-mediated signaling. Interacts with SH3BGRL. Interacts with ROR1. In terms of processing, autophosphorylated. Autophosphorylation occurs in trans, i.e. one subunit of the dimeric receptor phosphorylates tyrosine residues on the other subunit. Ligand-binding increases phosphorylation on tyrosine residues. Signaling via SEMA4C promotes phosphorylation at Tyr-1247. Dephosphorylated by PTPN12.

Its subcellular location is the cell membrane. It is found in the cell projection. The protein localises to the ruffle membrane. The protein resides in the early endosome. It localises to the cytoplasm. Its subcellular location is the perinuclear region. It is found in the nucleus. It carries out the reaction L-tyrosyl-[protein] + ATP = O-phospho-L-tyrosyl-[protein] + ADP + H(+). Its function is as follows. Protein tyrosine kinase that is part of several cell surface receptor complexes, but that apparently needs a coreceptor for ligand binding. Essential component of a neuregulin-receptor complex, although neuregulins do not interact with it alone. GP30 is a potential ligand for this receptor. Regulates outgrowth and stabilization of peripheral microtubules (MTs). Upon ERBB2 activation, the MEMO1-RHOA-DIAPH1 signaling pathway elicits the phosphorylation and thus the inhibition of GSK3B at cell membrane. This prevents the phosphorylation of APC and CLASP2, allowing its association with the cell membrane. In turn, membrane-bound APC allows the localization of MACF1 to the cell membrane, which is required for microtubule capture and stabilization. In the nucleus is involved in transcriptional regulation. Associates with the 5'-TCAAATTC-3' sequence in the PTGS2/COX-2 promoter and activates its transcription. Implicated in transcriptional activation of CDKN1A; the function involves STAT3 and SRC. Involved in the transcription of rRNA genes by RNA Pol I and enhances protein synthesis and cell growth. This is Receptor tyrosine-protein kinase erbB-2 (ERBB2) from Mesocricetus auratus (Golden hamster).